Here is a 790-residue protein sequence, read N- to C-terminus: MFESVNLDENSPEDRELAKVLSPPGSYLSPASLDSGSSFTNSGTSTSCFEPKNNLPSLSFLNARAGSLGGIFNHKQMTSPSNSNIGGENVESTTSSNDGSNENAGHPTTSEQDQNADHPTISQADDNGHSSLTPNPAVTSTVTDKKGNTVKRKYSRNGCSECKRRRMKCDETKPTCWQCARLNRQCVYVLNPKNKKRRTSNAQRVKEFRKHSTSLDNDHNNARKRQHSSCKAEKKKKVRQNLSEDTTDPKPITDNGKNVPLDEIESLEIPNLDLTTTMNGYDVNLLMQNLNDMVNMKLHDSYLLNEELKGLDLPDLDIPELLPASNVNSSVPISFLVNNVITFNTKLSSFKLGGIHDKYLKIFYYDCLDSIAPFFQNQGNPLRDILLSFAKNEAYLLSSILATGASIAYRKSNNLEDERNYCAYLSHCLSLLGEQFKNESNVLNRIEPIILTVIMLAWDCIYSMNSQWRSHLKGVTDLFKKINAGNSSKVLNVAKCWFKVMETFASISTVFGGSLIDNNDLDAIFDPYDYQYVDSLKFLNIMTPLNEFNLLRGHKEDFDLVIKEVFKSLNTIRSTEKNYFSKEEGLFTKKLDYLLLSSQTSSEKSKDQISYFNTQKILVEIDKQLDYEFIDKSGIIPSDNQSHPRISNIHDNAIDMVTLKNGEEVAISWYDISHQTQVLSFLLIVLLKLLGMPKESSTIQQVVKKIMSFFKFLDSDSPPQNSRTCYSNFAVLIAGLNAMDEETRAIVKRYYKINGGKFQKLTEHNLNRLEKVWYGKNQNYRLEEQDVLTW.

Disordered regions lie at residues 1–50 (MFES…SCFE) and 72–157 (FNHK…YSRN). Residues 35–47 (SGSSFTNSGTSTS) are compositionally biased toward low complexity. Polar residues-rich tracts occupy residues 75 to 113 (KQMT…SEQD) and 120 to 142 (TISQ…TSTV). Residues 159–186 (CSECKRRRMKCDETKPTCWQCARLNRQC) constitute a DNA-binding region (zn(2)-C6 fungal-type). The segment at 195 to 258 (KKRRTSNAQR…PKPITDNGKN (64 aa)) is disordered. Over residues 222-239 (ARKRQHSSCKAEKKKKVR) the composition is skewed to basic residues.

The protein resides in the nucleus. Activates the transcription of lysine biosynthesis genes. This activation is dependent on the inducer alpha-aminoadipate semialdehyde and repressed by lysine. The protein is Lysine biosynthesis regulatory protein LYS14 (LYS14) of Saccharomyces cerevisiae (strain ATCC 204508 / S288c) (Baker's yeast).